The following is a 358-amino-acid chain: Alanine racemase (358 aa).

The active-site Proton acceptor; specific for D-alanine is the K35. K35 carries the N6-(pyridoxal phosphate)lysine modification. R131 contacts substrate. Y253 functions as the Proton acceptor; specific for L-alanine in the catalytic mechanism. M301 provides a ligand contact to substrate.

The protein belongs to the alanine racemase family. Requires pyridoxal 5'-phosphate as cofactor.

It carries out the reaction L-alanine = D-alanine. It participates in amino-acid biosynthesis; D-alanine biosynthesis; D-alanine from L-alanine: step 1/1. In terms of biological role, catalyzes the interconversion of L-alanine and D-alanine. May also act on other amino acids. The polypeptide is Alanine racemase (alr) (Alteromonas mediterranea (strain DSM 17117 / CIP 110805 / LMG 28347 / Deep ecotype)).